A 72-amino-acid polypeptide reads, in one-letter code: DNA gyrase inhibitor YacG (72 aa).

Zn(2+) contacts are provided by Cys-14, Cys-17, Cys-33, and Cys-37.

It belongs to the DNA gyrase inhibitor YacG family. In terms of assembly, interacts with GyrB. Zn(2+) serves as cofactor.

Functionally, inhibits all the catalytic activities of DNA gyrase by preventing its interaction with DNA. Acts by binding directly to the C-terminal domain of GyrB, which probably disrupts DNA binding by the gyrase. This Mannheimia succiniciproducens (strain KCTC 0769BP / MBEL55E) protein is DNA gyrase inhibitor YacG.